The chain runs to 281 residues: MTKYTNADELKSLTLGQKTEYKHTYEPELLQAVPRSLNRDDLALGDELPFVGCDVWTLYELSWLNQNGLPQVAVGEVALPATSPNLVESKSFKLYLNSFNQTKFTSWDEVKETLVKDLSACAGETVKVDIFPVQRYSQQPIVDMQGECIDDQDIIIDDYEFNAAYLESSTSDVNIEETLHSHLLKSNCLITNQPDWGSVEIQYKGKKIDREKLLRYLISFRQHNEFHEQCVERIYTDIMKYCAPESLTVFARYTRRGGLDINPFRSSHLLAPKDNLRLARQ.

87 to 89 (VES) serves as a coordination point for substrate. 89–90 (SK) provides a ligand contact to NADPH. Cys188 serves as the catalytic Thioimide intermediate. Asp195 (proton donor) is an active-site residue. 227–228 (HE) is a substrate binding site. 256 to 257 (RG) serves as a coordination point for NADPH.

The protein belongs to the GTP cyclohydrolase I family. QueF type 2 subfamily. In terms of assembly, homodimer.

The protein localises to the cytoplasm. The catalysed reaction is 7-aminomethyl-7-carbaguanine + 2 NADP(+) = 7-cyano-7-deazaguanine + 2 NADPH + 3 H(+). It participates in tRNA modification; tRNA-queuosine biosynthesis. Catalyzes the NADPH-dependent reduction of 7-cyano-7-deazaguanine (preQ0) to 7-aminomethyl-7-deazaguanine (preQ1). The chain is NADPH-dependent 7-cyano-7-deazaguanine reductase from Aliivibrio fischeri (strain ATCC 700601 / ES114) (Vibrio fischeri).